A 279-amino-acid chain; its full sequence is Presqualene diphosphate synthase (279 aa).

Belongs to the phytoene/squalene synthase family. HpnD subfamily.

The catalysed reaction is 2 (2E,6E)-farnesyl diphosphate = presqualene diphosphate + diphosphate. It participates in secondary metabolite biosynthesis; hopanoid biosynthesis. Its function is as follows. Involved in the biosynthesis of the hopanoid precursor squalene (SQ) from farnesyl diphosphate (FPP). Catalyzes the first step, the formation of presqualene diphosphate (PSPP) from two molecules of FPP. This Sinorhizobium fredii (strain NBRC 101917 / NGR234) protein is Presqualene diphosphate synthase.